A 191-amino-acid chain; its full sequence is Protein phosphatase inhibitor 2 (191 aa).

The span at 20–31 (ESNKPVRQKITE) shows a compositional bias: basic and acidic residues. 2 disordered regions span residues 20-52 (ESNKPVRQKITEPKTPYHPMMDDDGSLSPRGRA) and 67-191 (RNVL…PELI). Phosphoserine occurs at positions 45 and 47. Over residues 93–109 (SDEEEEEADPMDQDEEG) the composition is skewed to acidic residues. The span at 114–136 (KNERFNAHRKAHYDEFRKVKELR) shows a compositional bias: basic and acidic residues.

In terms of assembly, interacts with protein phosphatase 1. Interacts with TOPP1, SRK2D/SNRK2.2, SRK2I/SNRK2.3, SRK2E/SNRK2.6, SRK2C/SNRK2.8 and PYL11. Post-translationally, phosphorylated in vivo. In terms of tissue distribution, expressed in roots, cotyledons, leaves, flowers and siliques.

The protein resides in the nucleus. It is found in the cytoplasm. In terms of biological role, inhibitor of protein-phosphatase 1 (PP1). Binds to and inhibits PP1 activity. Acts as negative regulator of abscisic acid (ABA) signaling. Enhances the inhibition of SRK2E/SNRK2.6 by TOPP1. May promote the interaction between TOPP1 and the ABA receptor PYL11. This chain is Protein phosphatase inhibitor 2, found in Arabidopsis thaliana (Mouse-ear cress).